We begin with the raw amino-acid sequence, 70 residues long: Movement protein TGBp3 (70 aa).

Residues 1-6 lie on the Lumenal side of the membrane; it reads MEANTY. The helical transmembrane segment at 7-27 threads the bilayer; the sequence is LNAIILVLVVTIIAVISTSLV. At 28–70 the chain is on the cytoplasmic side; it reads RTEPCVIKITGESITVLACKLDAETIRAIADLKPLSVERLSFH.

This sequence belongs to the Tymovirales TGBp3 protein family.

It is found in the host endoplasmic reticulum membrane. Plays a role in viral cell-to-cell propagation, by facilitating genome transport to neighboring plant cells through plasmosdesmata. May induce the formation of granular vesicles derived from the Endoplasmic reticulum, which align on actin filaments. This Potato virus X (PVX) protein is Movement protein TGBp3.